The sequence spans 393 residues: Probable xylan O-acetyltransferase 11 (393 aa).

At 1-9 (MHQPAIMQR) the chain is on the cytoplasmic side. A helical; Signal-anchor for type II membrane protein membrane pass occupies residues 10–26 (ALAVVALLAAAAAIAAA). At 27-393 (QGESPELLPF…LFFPARDEAI (367 aa)) the chain is on the lumenal side. Cystine bridges form between Cys45-Cys96, Cys67-Cys132, Cys76-Cys368, and Cys283-Cys364. N-linked (GlcNAc...) asparagine glycosylation is present at Asn102. The GDS motif motif lies at 119 to 121 (GDS). Ser121 functions as the Nucleophile in the catalytic mechanism. Asn325 carries N-linked (GlcNAc...) asparagine glycosylation. Asp363 acts as the Proton donor in catalysis. The DXXH motif motif lies at 363 to 366 (DCTH). The active-site Proton acceptor is His366.

This sequence belongs to the PC-esterase family. TBL subfamily. Expressed in roots, leaves and stems.

The protein resides in the golgi apparatus membrane. Probable xylan acetyltransferase required for 2-O- and 3-O-monoacetylation of xylosyl residues in xylan. Possesses extremely low activity in vitro. In Oryza sativa subsp. japonica (Rice), this protein is Probable xylan O-acetyltransferase 11.